We begin with the raw amino-acid sequence, 599 residues long: NADH-quinone oxidoreductase subunit C/D (599 aa).

The NADH dehydrogenase I subunit C stretch occupies residues 1–189; sequence MTDLTTHDLA…DPFELTKQKE (189 aa). Residues 213-599 form an NADH dehydrogenase I subunit D region; sequence DFMFLNLGPN…IDFVMSDVDR (387 aa).

It in the N-terminal section; belongs to the complex I 30 kDa subunit family. In the C-terminal section; belongs to the complex I 49 kDa subunit family. NDH-1 is composed of 13 different subunits. Subunits NuoB, CD, E, F, and G constitute the peripheral sector of the complex.

It localises to the cell inner membrane. The enzyme catalyses a quinone + NADH + 5 H(+)(in) = a quinol + NAD(+) + 4 H(+)(out). Its function is as follows. NDH-1 shuttles electrons from NADH, via FMN and iron-sulfur (Fe-S) centers, to quinones in the respiratory chain. The immediate electron acceptor for the enzyme in this species is believed to be ubiquinone. Couples the redox reaction to proton translocation (for every two electrons transferred, four hydrogen ions are translocated across the cytoplasmic membrane), and thus conserves the redox energy in a proton gradient. The chain is NADH-quinone oxidoreductase subunit C/D from Pectobacterium atrosepticum (strain SCRI 1043 / ATCC BAA-672) (Erwinia carotovora subsp. atroseptica).